A 382-amino-acid polypeptide reads, in one-letter code: MSLDFLPFSRPSIGEDEIAAVEQVLRSGWITTGPKNQELEQRFAERLGCRHAVALSSATGALHVTLLALGIGPGDEVITPSLTWVSTANVITLLGATPVFVDVDRDTLMCSAQAVEAAIGPRTRAIVPVHYAGSTLDLEGLRTVAGRHGIALVEDAAHAVGSEYRGRPVGSRGTAIFSFHAIKNLTCAEGAMFVSDDSALAERVRRLKFHGLGVDAYDRLSHGRKPQAEVIEPGFKYNLADLNAALALVQLKRLDALNARRQALAERYLERLAGLPLAPLGLPAHKQRHAWHLFILRIDAEACGLGRDAFMEALKARGIGSGIHFIASHLHHYYRQRQPRLSLPNSEWNSARLCSIPLFPDMRDDDIERVARAIEEILEKRR.

K183 carries the N6-(pyridoxal phosphate)lysine modification.

This sequence belongs to the DegT/DnrJ/EryC1 family. ArnB subfamily. In terms of assembly, homodimer. Pyridoxal 5'-phosphate serves as cofactor.

The catalysed reaction is UDP-4-amino-4-deoxy-beta-L-arabinose + 2-oxoglutarate = UDP-beta-L-threo-pentopyranos-4-ulose + L-glutamate. It functions in the pathway nucleotide-sugar biosynthesis; UDP-4-deoxy-4-formamido-beta-L-arabinose biosynthesis; UDP-4-deoxy-4-formamido-beta-L-arabinose from UDP-alpha-D-glucuronate: step 2/3. Its pathway is bacterial outer membrane biogenesis; lipopolysaccharide biosynthesis. Its function is as follows. Catalyzes the conversion of UDP-4-keto-arabinose (UDP-Ara4O) to UDP-4-amino-4-deoxy-L-arabinose (UDP-L-Ara4N). The modified arabinose is attached to lipid A and is required for resistance to polymyxin and cationic antimicrobial peptides. In Pseudomonas aeruginosa (strain LESB58), this protein is UDP-4-amino-4-deoxy-L-arabinose--oxoglutarate aminotransferase.